We begin with the raw amino-acid sequence, 225 residues long: 2-C-methyl-D-erythritol 4-phosphate cytidylyltransferase (225 aa).

The protein belongs to the IspD/TarI cytidylyltransferase family. IspD subfamily.

It carries out the reaction 2-C-methyl-D-erythritol 4-phosphate + CTP + H(+) = 4-CDP-2-C-methyl-D-erythritol + diphosphate. The protein operates within isoprenoid biosynthesis; isopentenyl diphosphate biosynthesis via DXP pathway; isopentenyl diphosphate from 1-deoxy-D-xylulose 5-phosphate: step 2/6. In terms of biological role, catalyzes the formation of 4-diphosphocytidyl-2-C-methyl-D-erythritol from CTP and 2-C-methyl-D-erythritol 4-phosphate (MEP). The sequence is that of 2-C-methyl-D-erythritol 4-phosphate cytidylyltransferase from Clostridium perfringens (strain SM101 / Type A).